The sequence spans 148 residues: Glutamyl-tRNA(Gln) amidotransferase subunit C, mitochondrial (148 aa).

It belongs to the GatC family. Subunit of the heterotrimeric GatCAB amidotransferase (AdT) complex, composed of A, B and C subunits.

Its subcellular location is the mitochondrion. The catalysed reaction is L-glutamyl-tRNA(Gln) + L-glutamine + ATP + H2O = L-glutaminyl-tRNA(Gln) + L-glutamate + ADP + phosphate + H(+). Allows the formation of correctly charged Gln-tRNA(Gln) through the transamidation of misacylated Glu-tRNA(Gln) in the mitochondria. The reaction takes place in the presence of glutamine and ATP through an activated gamma-phospho-Glu-tRNA(Gln). The protein is Glutamyl-tRNA(Gln) amidotransferase subunit C, mitochondrial of Drosophila pseudoobscura pseudoobscura (Fruit fly).